The sequence spans 397 residues: Phosphoglycerate kinase (397 aa).

Substrate-binding positions include 21–23, Arg-36, 59–62, Arg-118, and Arg-151; these read DFN and HCGR. ATP is bound by residues Lys-201, Glu-323, and 353–356; that span reads GGDT.

Belongs to the phosphoglycerate kinase family. Monomer.

It localises to the cytoplasm. It carries out the reaction (2R)-3-phosphoglycerate + ATP = (2R)-3-phospho-glyceroyl phosphate + ADP. It participates in carbohydrate degradation; glycolysis; pyruvate from D-glyceraldehyde 3-phosphate: step 2/5. This Bartonella quintana (strain Toulouse) (Rochalimaea quintana) protein is Phosphoglycerate kinase.